The sequence spans 176 residues: RNA pyrophosphohydrolase (176 aa).

The Nudix hydrolase domain maps to glycine 6 to lysine 149. A Nudix box motif is present at residues glycine 38–glycine 59.

It belongs to the Nudix hydrolase family. RppH subfamily. Requires a divalent metal cation as cofactor.

Functionally, accelerates the degradation of transcripts by removing pyrophosphate from the 5'-end of triphosphorylated RNA, leading to a more labile monophosphorylated state that can stimulate subsequent ribonuclease cleavage. This Salmonella paratyphi C (strain RKS4594) protein is RNA pyrophosphohydrolase.